We begin with the raw amino-acid sequence, 308 residues long: Ribonuclease Z (308 aa).

Residues His-62, His-64, Asp-66, His-67, His-140, Asp-211, and His-269 each contribute to the Zn(2+) site. Asp-66 (proton acceptor) is an active-site residue.

It belongs to the RNase Z family. As to quaternary structure, homodimer. Requires Zn(2+) as cofactor.

It carries out the reaction Endonucleolytic cleavage of RNA, removing extra 3' nucleotides from tRNA precursor, generating 3' termini of tRNAs. A 3'-hydroxy group is left at the tRNA terminus and a 5'-phosphoryl group is left at the trailer molecule.. Its function is as follows. Zinc phosphodiesterase, which displays some tRNA 3'-processing endonuclease activity. Probably involved in tRNA maturation, by removing a 3'-trailer from precursor tRNA. This chain is Ribonuclease Z, found in Treponema denticola (strain ATCC 35405 / DSM 14222 / CIP 103919 / JCM 8153 / KCTC 15104).